We begin with the raw amino-acid sequence, 242 residues long: Uridylate kinase (242 aa).

Residue 16 to 19 coordinates ATP; that stretch reads KVSG. Glycine 58 is a UMP binding site. ATP-binding residues include glycine 59 and arginine 63. Residues aspartate 78 and 139 to 146 each bind UMP; that span reads TGNPFCTT. ATP-binding residues include threonine 166, glutamine 167, tyrosine 172, and aspartate 175.

The protein belongs to the UMP kinase family. As to quaternary structure, homohexamer.

The protein resides in the cytoplasm. It carries out the reaction UMP + ATP = UDP + ADP. It participates in pyrimidine metabolism; CTP biosynthesis via de novo pathway; UDP from UMP (UMPK route): step 1/1. With respect to regulation, inhibited by UTP. Its function is as follows. Catalyzes the reversible phosphorylation of UMP to UDP. This is Uridylate kinase from Rickettsia massiliae (strain Mtu5).